The primary structure comprises 197 residues: Holliday junction branch migration complex subunit RuvA (197 aa).

The domain I stretch occupies residues 1–63; the sequence is MYAYLKGIIT…EDAHLLYGFR (63 aa). The domain II stretch occupies residues 64 to 142; that stretch reads SEDEKKLFLS…VAGDDLPAKV (79 aa). The tract at residues 143 to 147 is flexible linker; sequence AVQAS. Positions 148-197 are domain III; sequence AENQELEEAMEAMLALGYKATELKKIKKFFEGTTDTAENYIKSALKMLVK.

The protein belongs to the RuvA family. In terms of assembly, homotetramer. Forms an RuvA(8)-RuvB(12)-Holliday junction (HJ) complex. HJ DNA is sandwiched between 2 RuvA tetramers; dsDNA enters through RuvA and exits via RuvB. An RuvB hexamer assembles on each DNA strand where it exits the tetramer. Each RuvB hexamer is contacted by two RuvA subunits (via domain III) on 2 adjacent RuvB subunits; this complex drives branch migration. In the full resolvosome a probable DNA-RuvA(4)-RuvB(12)-RuvC(2) complex forms which resolves the HJ.

Its subcellular location is the cytoplasm. In terms of biological role, the RuvA-RuvB-RuvC complex processes Holliday junction (HJ) DNA during genetic recombination and DNA repair, while the RuvA-RuvB complex plays an important role in the rescue of blocked DNA replication forks via replication fork reversal (RFR). RuvA specifically binds to HJ cruciform DNA, conferring on it an open structure. The RuvB hexamer acts as an ATP-dependent pump, pulling dsDNA into and through the RuvAB complex. HJ branch migration allows RuvC to scan DNA until it finds its consensus sequence, where it cleaves and resolves the cruciform DNA. This Streptococcus pneumoniae serotype 19F (strain G54) protein is Holliday junction branch migration complex subunit RuvA.